The chain runs to 176 residues: Ribosome maturation factor RimM (176 aa).

The region spanning aspartate 97–phenylalanine 176 is the PRC barrel domain.

Belongs to the RimM family. In terms of assembly, binds ribosomal protein uS19.

The protein localises to the cytoplasm. Functionally, an accessory protein needed during the final step in the assembly of 30S ribosomal subunit, possibly for assembly of the head region. Essential for efficient processing of 16S rRNA. May be needed both before and after RbfA during the maturation of 16S rRNA. It has affinity for free ribosomal 30S subunits but not for 70S ribosomes. The sequence is that of Ribosome maturation factor RimM from Shewanella denitrificans (strain OS217 / ATCC BAA-1090 / DSM 15013).